Here is a 474-residue protein sequence, read N- to C-terminus: Protein CyaE (474 aa).

A signal peptide spans 1 to 31 (MAAVQVRRRGRALALALWAGFALSVGGGVRA).

This sequence belongs to the outer membrane factor (OMF) (TC 1.B.17) family.

Its subcellular location is the cell outer membrane. CyaE is necessary for transport of calmodulin-sensitive adenylate cyclase-hemolysin (cyclolysin). This Bordetella pertussis (strain Tohama I / ATCC BAA-589 / NCTC 13251) protein is Protein CyaE (cyaE).